The sequence spans 418 residues: Vasopressin V1a receptor (418 aa).

Low complexity predominate over residues 1 to 15; the sequence is MRFSGSPSPGPSNSS. The tract at residues 1-20 is disordered; that stretch reads MRFSGSPSPGPSNSSRWWPL. Topologically, residues 1-51 are extracellular; sequence MRFSGSPSPGPSNSSRWWPLDAGDANTSGDLAGLGEDGGPQADTRNEELAK. 2 N-linked (GlcNAc...) asparagine glycosylation sites follow: N13 and N26. Residues 52-75 form a helical membrane-spanning segment; sequence LEIAVLAVIFVVAVLGNSSVLLAL. The Cytoplasmic segment spans residues 76 to 87; that stretch reads HRTPRKTSRMHL. A helical membrane pass occupies residues 88-109; the sequence is FIRHLSLADLAVAFFQVLPQLG. Topologically, residues 110-124 are extracellular; sequence WDITYRFRGPDGLCR. The cysteines at positions 123 and 202 are disulfide-linked. Residues 125–146 traverse the membrane as a helical segment; the sequence is VVKHMQVFAMFASAYMLVVMTA. Residues 147-167 are Cytoplasmic-facing; that stretch reads DRYIAVCHPLKTLQQPARRSR. The chain crosses the membrane as a helical span at residues 168–189; the sequence is LMIAAAWVLSFVLSTPQYFVFS. At 190 to 217 the chain is on the extracellular side; that stretch reads MVEVSNVTKTYDCWANFIHPWGLPAYVT. N-linked (GlcNAc...) asparagine glycosylation occurs at N195. A helical membrane pass occupies residues 218-238; it reads WMTGSVFVAPVVILGTCYGFI. The Cytoplasmic portion of the chain corresponds to 239–293; it reads CYHIWRKVRGKTAGRQGGPAEGAGESALYRGVLHARCVSSVKTISRAKIRTVKMT. A helical transmembrane segment spans residues 294-313; the sequence is FVIVTAYIVCWAPFFIIQMW. The Extracellular portion of the chain corresponds to 314–331; the sequence is SAWDKNFSWVESENPATA. N319 carries N-linked (GlcNAc...) asparagine glycosylation. A helical transmembrane segment spans residues 332 to 351; that stretch reads IPALLASLNSCCNPWIYMFF. Residues 352 to 418 lie on the Cytoplasmic side of the membrane; the sequence is SGHLLQDCAQ…KSIKFIPVST (67 aa). 2 S-palmitoyl cysteine lipidation sites follow: C365 and C366. The segment at 377 to 418 is disordered; it reads GSDSMSRRQTSFTNNRSPTNSMGTWKDSPKSSKSIKFIPVST. A compositionally biased stretch (polar residues) spans 383 to 399; that stretch reads RRQTSFTNNRSPTNSMG. S404 is modified (phosphoserine).

It belongs to the G-protein coupled receptor 1 family. Vasopressin/oxytocin receptor subfamily.

The protein resides in the cell membrane. Functionally, receptor for arginine vasopressin. The activity of this receptor is mediated by G proteins which activate a phosphatidyl-inositol-calcium second messenger system. This is Vasopressin V1a receptor (AVPR1A) from Ovis aries (Sheep).